A 346-amino-acid chain; its full sequence is Phosphate acyltransferase (346 aa).

The protein belongs to the PlsX family. As to quaternary structure, homodimer. Probably interacts with PlsY.

The protein resides in the cytoplasm. It carries out the reaction a fatty acyl-[ACP] + phosphate = an acyl phosphate + holo-[ACP]. Its pathway is lipid metabolism; phospholipid metabolism. Its function is as follows. Catalyzes the reversible formation of acyl-phosphate (acyl-PO(4)) from acyl-[acyl-carrier-protein] (acyl-ACP). This enzyme utilizes acyl-ACP as fatty acyl donor, but not acyl-CoA. This chain is Phosphate acyltransferase, found in Pelobacter propionicus (strain DSM 2379 / NBRC 103807 / OttBd1).